We begin with the raw amino-acid sequence, 1054 residues long: FERM, ARHGEF and pleckstrin domain-containing protein 2 (1054 aa).

The FERM domain maps to 44 to 324 (LHLRVKLLDN…EYHTFFRLLD (281 aa)). Phosphoserine is present on residues serine 389 and serine 439. The disordered stretch occupies residues 421–527 (EFKDSSSSLT…GAGMDCEEPR (107 aa)). The span at 468 to 492 (PGPGLSTKSPQPSPSSRKSPLSLSP) shows a compositional bias: low complexity. The 192-residue stretch at 535-726 (EAYFIVKEIL…TEVTTTLQHI (192 aa)) folds into the DH domain. In terms of domain architecture, PH 1 spans 755–852 (EFIREGCLHK…WMLDLNSAIQ (98 aa)). The tract at residues 856–894 (SGGDTAPALPGRTVCTRPPRSPNEVSLEQESEDDARGVR) is disordered. Residues 929-1026 (ENQLSGYLLR…WMEVIQGASS (98 aa)) form the PH 2 domain. Residues 1029-1054 (GRAPSIVQDGPQPSSGLEGMVRGKEE) are disordered.

As to quaternary structure, interacts with PLXNA1. Interaction with PLXNA1 or PIP5K1C lowers its guanine nucleotide exchange activity. Dissociates from PLXNA1 when SEMA3A binds to the receptor. Interacts with PIP5K1C via its FERM domain. The interaction with PIP5K1C is enhanced by SEMA3A binding. Interacts with RAC1.

Functionally, functions as a guanine nucleotide exchange factor that activates RAC1. May have relatively low activity. Plays a role in the response to class 3 semaphorins and remodeling of the actin cytoskeleton. Plays a role in TNFSF11-mediated osteoclast differentiation, especially in podosome rearrangement and reorganization of the actin cytoskeleton. Regulates the activation of ITGB3, integrin signaling and cell adhesion. The sequence is that of FERM, ARHGEF and pleckstrin domain-containing protein 2 (FARP2) from Homo sapiens (Human).